Consider the following 387-residue polypeptide: MQVFWFIPTHGDSRYLGTSEGAREVGIDYLKQVAVAADTLGYEGVLIPTGRSCEDPWVVASALAAVTQKLRFLVAVRPGLMTPTLAARMAATFDRISGGRLLVNLVTGGDVAELEGDGLFLDHAARYEASSEFIRIWRDVLAASHDSGEISFKGRHLRVKGARVLYPPLQRPHPPVYFGGSSAAAHELAGEQVDTYLTWGEPPADVALKLADVRKHAERHGRTVKFGIRLHVIVRETEAAAWAAADDLISRLDDETVARAQAVFAKMDSEGQRRMAALHAGGSKRTREALEISPNLWAGVGLVRGGAGTALVGDPHQVAARIREYSELGIDTFVLSGYPHLEEAYRFAELVFPLLPLAVRNKLPGQVLSGPFGEVMATGIVPRASQS.

Belongs to the SsuD family.

The catalysed reaction is an alkanesulfonate + FMNH2 + O2 = an aldehyde + FMN + sulfite + H2O + 2 H(+). Catalyzes the desulfonation of aliphatic sulfonates. The protein is Alkanesulfonate monooxygenase of Cupriavidus pinatubonensis (strain JMP 134 / LMG 1197) (Cupriavidus necator (strain JMP 134)).